A 283-amino-acid polypeptide reads, in one-letter code: Formamidopyrimidine-DNA glycosylase (283 aa).

The active-site Schiff-base intermediate with DNA is the proline 2. The active-site Proton donor is glutamate 3. Residue lysine 58 is the Proton donor; for beta-elimination activity of the active site. Residues histidine 100, arginine 119, and arginine 162 each coordinate DNA. The segment at 247–283 (RVYGREGLPCVTPGCSGTVGRIVQSGRSSFHCPLCQR) adopts an FPG-type zinc-finger fold. Arginine 273 acts as the Proton donor; for delta-elimination activity in catalysis.

The protein belongs to the FPG family. Monomer. It depends on Zn(2+) as a cofactor.

It catalyses the reaction Hydrolysis of DNA containing ring-opened 7-methylguanine residues, releasing 2,6-diamino-4-hydroxy-5-(N-methyl)formamidopyrimidine.. It carries out the reaction 2'-deoxyribonucleotide-(2'-deoxyribose 5'-phosphate)-2'-deoxyribonucleotide-DNA = a 3'-end 2'-deoxyribonucleotide-(2,3-dehydro-2,3-deoxyribose 5'-phosphate)-DNA + a 5'-end 5'-phospho-2'-deoxyribonucleoside-DNA + H(+). Its function is as follows. Involved in base excision repair of DNA damaged by oxidation or by mutagenic agents. Acts as a DNA glycosylase that recognizes and removes damaged bases. Has a preference for oxidized purines, such as 7,8-dihydro-8-oxoguanine (8-oxoG). Has AP (apurinic/apyrimidinic) lyase activity and introduces nicks in the DNA strand. Cleaves the DNA backbone by beta-delta elimination to generate a single-strand break at the site of the removed base with both 3'- and 5'-phosphates. This chain is Formamidopyrimidine-DNA glycosylase, found in Cereibacter sphaeroides (strain ATCC 17029 / ATH 2.4.9) (Rhodobacter sphaeroides).